We begin with the raw amino-acid sequence, 256 residues long: Chalcone--flavanone isomerase (256 aa).

Substrate-binding residues include Thr-51, Asn-116, and Ser-193. Residues Asn-219–Val-256 form a disordered region. The segment covering Glu-228–Val-256 has biased composition (basic and acidic residues).

Belongs to the chalcone isomerase family. As to expression, nodules.

It carries out the reaction a chalcone = a flavanone.. Its pathway is secondary metabolite biosynthesis; flavonoid biosynthesis. Functionally, catalyzes the intramolecular cyclization of bicyclic chalcones into tricyclic (S)-flavanones. Responsible for the isomerization of 4,2',4',6'-tetrahydroxychalcone (also termed chalcone) into naringenin. In Elaeagnus umbellata (Autumn olive), this protein is Chalcone--flavanone isomerase (CHI).